The sequence spans 529 residues: MRSEKSLTLAAPGEVRGPEGEQQDAGDFPEAGGGGGCCSSERLVINISGLRFETQLRTLSLFPDTLLGDPGRRVRFFDPLRNEYFFDRNRPSFDAILYYYQSGGRLRRPVNVPLDIFLEEIRFYQLGDEALAAFREDEGCLPEGGEDEKPLPSQPFQRQVWLLFEYPESSGPARGIAIVSVLVILISIVIFCLETLPQFRVDGRGGNNGGVSRVSPVSRGSQEEEEDEDDSYTFHHGITPGEMGTGGSSSLSTLGGSFFTDPFFLVETLCIVWFTFELLVRFSACPSKPAFFRNIMNIIDLVAIFPYFITLGTELVQQQEQQPASGGGGQNGQQAMSLAILRVIRLVRVFRIFKLSRHSKGLQILGKTLQASMRELGLLIFFLFIGVILFSSAVYFAEADDDDSLFPSIPDAFWWAVVTMTTVGYGDMYPMTVGGKIVGSLCAIAGVLTIALPVPVIVSNFNYFYHRETEQEEQGQYTHVTCGQPAPDLRATDNGLGKPDFPEANRERRPSYLPTPHRAYAEKRMLTEV.

Residues Met1–Gly33 form a disordered region. Topologically, residues Met1–Gly171 are cytoplasmic. Ser3 is modified (phosphoserine). Residues Pro172–Leu193 traverse the membrane as a helical segment. At Glu194–Pro262 the chain is on the extracellular side. Positions Gly210–Gly220 are enriched in low complexity. Residues Gly210–Thr233 form a disordered region. A helical membrane pass occupies residues Phe263–Ala284. Residue Cys285 is the site of S-palmitoyl cysteine attachment. Residues Cys285–Ile295 are Cytoplasmic-facing. A helical membrane pass occupies residues Met296 to Val316. At Gln317–Ser337 the chain is on the extracellular side. A helical; Voltage-sensor transmembrane segment spans residues Leu338–His358. Over Ser359 to Met373 the chain is Cytoplasmic. The S4-S5 linker stretch occupies residues Lys360–Met373. The chain crosses the membrane as a helical span at residues Arg374–Tyr395. The Extracellular segment spans residues Phe396 to Ile409. The segment at residues Pro410–Thr421 is an intramembrane region (helical). The Selectivity filter motif lies at Thr422–Asp427. The stretch at Thr422 to Tyr429 is an intramembrane region. Residues Pro430–Lys436 lie on the Extracellular side of the membrane. A helical transmembrane segment spans residues Ile437–Tyr465. Over His466–Val529 the chain is Cytoplasmic. Residues Asp488 to Leu513 form a disordered region. The segment covering Asp500–Pro510 has biased composition (basic and acidic residues). Ser511 is subject to Phosphoserine; by PKA. The short motif at Thr527 to Val529 is the PDZ-binding element.

It belongs to the potassium channel family. A (Shaker) (TC 1.A.1.2) subfamily. Kv1.6/KCNA6 sub-subfamily. Homotetramer and heterotetramer of potassium channel proteins. Interacts with KCNAB1 and KCNAB2.

It localises to the cell membrane. The catalysed reaction is K(+)(in) = K(+)(out). Functionally, voltage-gated potassium channel that mediates transmembrane potassium transport in excitable membranes. Forms tetrameric potassium-selective channels through which potassium ions pass in accordance with their electrochemical gradient. The channel alternates between opened and closed conformations in response to the voltage difference across the membrane. Can form functional homotetrameric channels and heterotetrameric channels that contain variable proportions of KCNA1, KCNA2, KCNA4, KCNA6, and possibly other family members as well; channel properties depend on the type of alpha subunits that are part of the channel. Channel properties are modulated by cytoplasmic beta subunits that regulate the subcellular location of the alpha subunits and promote rapid inactivation. Homotetrameric channels display rapid activation and slow inactivation. This Homo sapiens (Human) protein is Potassium voltage-gated channel subfamily A member 6 (KCNA6).